The sequence spans 362 residues: Formate dehydrogenase (362 aa).

V93 and N119 together coordinate substrate. NAD(+) is bound by residues 174–175 (RI), D195, 230–234 (PLHAG), T256, D282, 311–314 (HYSG), and S357.

The protein belongs to the D-isomer specific 2-hydroxyacid dehydrogenase family. FDH subfamily. In terms of assembly, homodimer.

It localises to the cytoplasm. It carries out the reaction formate + NAD(+) = CO2 + NADH. Catalyzes the NAD(+)-dependent oxidation of formate to carbon dioxide. Formate oxidation is the final step in the methanol oxidation pathway in methylotrophic microorganisms. Has a role in the detoxification of exogenous formate in non-methylotrophic organisms. This Pichia angusta (Yeast) protein is Formate dehydrogenase.